Reading from the N-terminus, the 121-residue chain is Group 1 truncated hemoglobin (121 aa).

Met1 is modified (N-acetylmethionine). A heme-binding site is contributed by His73.

Belongs to the truncated hemoglobin family. Group I subfamily. In terms of assembly, monomer. It depends on heme as a cofactor.

The protein is Group 1 truncated hemoglobin of Tetrahymena thermophila.